We begin with the raw amino-acid sequence, 218 residues long: MPMTLGYWDIRGLAHAIRLFLEYTDSSYEEKRYTMGDAPDYDQSQWLNEKFKLGLDFPNLPYLIDGSHKITQSNAILRYLGRKHNLCGETEEERIRVDILENQLMDNRMVLARLCYNADFEKLKPGYLEQLPGMMRLYSEFLGKRPWFAGDKITFVDFIAYDVLERNQVFEAKCLDAFPNLKDFIARFEGLKKISDYMKTSRFLPRPMFTKMATWGSN.

Residues 1 to 88 form the GST N-terminal domain; it reads MPMTLGYWDI…YLGRKHNLCG (88 aa). Residues 7–8, 46–50, 59–60, and 72–73 each bind glutathione; these read YW, WLNEK, NL, and QS. A GST C-terminal domain is found at 90-208; the sequence is TEEERIRVDI…KTSRFLPRPM (119 aa). Residue tyrosine 116 coordinates substrate.

Belongs to the GST superfamily. Mu family. In terms of assembly, homodimer.

The protein resides in the cytoplasm. The catalysed reaction is RX + glutathione = an S-substituted glutathione + a halide anion + H(+). In terms of biological role, conjugation of reduced glutathione to a wide number of exogenous and endogenous hydrophobic electrophiles. In Mus musculus (Mouse), this protein is Glutathione S-transferase Mu 7 (Gstm7).